We begin with the raw amino-acid sequence, 352 residues long: Non-disjunction protein 1 (352 aa).

Interacts with MPS3.

It is found in the nucleus. The protein localises to the chromosome. Its subcellular location is the telomere. Required for telomeric clustering (bouquet stage) during meiosis 1 prophase, formation and efficient homolog pairing, meiosis 1 disjunction, and telomere deletion during meiosis. Also promotes meiotic recombination. This chain is Non-disjunction protein 1 (NDJ1), found in Saccharomyces cerevisiae (strain ATCC 204508 / S288c) (Baker's yeast).